The primary structure comprises 332 residues: 2,3-diketo-L-gulonate reductase (332 aa).

The active-site Proton donor is the histidine 44. NAD(+)-binding positions include 168–174 (ITMVDMS), 224–225 (WK), and 304–306 (GHE).

It belongs to the LDH2/MDH2 oxidoreductase family. DlgD subfamily. As to quaternary structure, homodimer.

It is found in the cytoplasm. The enzyme catalyses 3-dehydro-L-gulonate + NAD(+) = 2,3-dioxo-L-gulonate + NADH + H(+). The catalysed reaction is 3-dehydro-L-gulonate + NADP(+) = 2,3-dioxo-L-gulonate + NADPH + H(+). Catalyzes the reduction of 2,3-diketo-L-gulonate in the presence of NADH, to form 3-keto-L-gulonate. This is 2,3-diketo-L-gulonate reductase from Salmonella heidelberg (strain SL476).